Consider the following 411-residue polypeptide: 1-deoxy-D-xylulose 5-phosphate reductoisomerase (411 aa).

Residues threonine 12, glycine 13, serine 14, isoleucine 15, and asparagine 127 each contribute to the NADPH site. Lysine 128 is a binding site for 1-deoxy-D-xylulose 5-phosphate. Glutamate 129 serves as a coordination point for NADPH. Aspartate 153 contacts Mn(2+). Positions 154, 155, 189, and 212 each coordinate 1-deoxy-D-xylulose 5-phosphate. Glutamate 155 lines the Mn(2+) pocket. Glycine 218 is an NADPH binding site. The 1-deoxy-D-xylulose 5-phosphate site is built by serine 225, asparagine 230, lysine 231, and glutamate 234. Mn(2+) is bound at residue glutamate 234.

The protein belongs to the DXR family. Mg(2+) is required as a cofactor. The cofactor is Mn(2+).

The enzyme catalyses 2-C-methyl-D-erythritol 4-phosphate + NADP(+) = 1-deoxy-D-xylulose 5-phosphate + NADPH + H(+). It participates in isoprenoid biosynthesis; isopentenyl diphosphate biosynthesis via DXP pathway; isopentenyl diphosphate from 1-deoxy-D-xylulose 5-phosphate: step 1/6. In terms of biological role, catalyzes the NADPH-dependent rearrangement and reduction of 1-deoxy-D-xylulose-5-phosphate (DXP) to 2-C-methyl-D-erythritol 4-phosphate (MEP). The chain is 1-deoxy-D-xylulose 5-phosphate reductoisomerase from Colwellia psychrerythraea (strain 34H / ATCC BAA-681) (Vibrio psychroerythus).